Consider the following 248-residue polypeptide: MAGHSKWANIQHRKGAQDAKRGKLFTKLIREITVASRTGGPDPGNNPRLRTAIDKALVANMSKDTIERAIKKGSGAADGDNYEEVRYEGYGPGGIAVLVDCLTDNRNRTVAEVRHAFSKAGGNLGTDGSVAYLFSKTGVVSFSADLGEDRVMEPALDAGADDVVVNEDGSVDVLTAPDQFEAVRDALEAAGLTPESAEVTMRASTSVKLDKEDAEKMIRLLERLEDLDDVQNVYSNADISEDILAELG.

It belongs to the TACO1 family.

The protein resides in the cytoplasm. This is Probable transcriptional regulatory protein MCA1220 from Methylococcus capsulatus (strain ATCC 33009 / NCIMB 11132 / Bath).